A 260-amino-acid chain; its full sequence is Transcriptional activator protein AsaR (260 aa).

Residues E176–G241 form the HTH luxR-type domain. Positions S200–N219 form a DNA-binding region, H-T-H motif.

This sequence belongs to the autoinducer-regulated transcriptional regulatory protein family.

Functionally, functions as a BHL-responsive transcriptional regulator. This Aeromonas salmonicida protein is Transcriptional activator protein AsaR.